The chain runs to 196 residues: Phosphoheptose isomerase (196 aa).

The 166-residue stretch at valine 31 to valine 196 folds into the SIS domain. Asparagine 46–glycine 48 contributes to the substrate binding site. The Zn(2+) site is built by histidine 55 and glutamate 59. Substrate is bound by residues glutamate 59, asparagine 88–aspartate 89, serine 114–serine 116, serine 119, and glutamine 166. Glutamine 166 and histidine 174 together coordinate Zn(2+).

It belongs to the SIS family. GmhA subfamily. The cofactor is Zn(2+).

It is found in the cytoplasm. The catalysed reaction is 2 D-sedoheptulose 7-phosphate = D-glycero-alpha-D-manno-heptose 7-phosphate + D-glycero-beta-D-manno-heptose 7-phosphate. Its pathway is carbohydrate biosynthesis; D-glycero-D-manno-heptose 7-phosphate biosynthesis; D-glycero-alpha-D-manno-heptose 7-phosphate and D-glycero-beta-D-manno-heptose 7-phosphate from sedoheptulose 7-phosphate: step 1/1. Functionally, catalyzes the isomerization of sedoheptulose 7-phosphate in D-glycero-D-manno-heptose 7-phosphate. This Crocosphaera subtropica (strain ATCC 51142 / BH68) (Cyanothece sp. (strain ATCC 51142)) protein is Phosphoheptose isomerase.